The sequence spans 906 residues: Gamma-tubulin complex component 3 homolog (906 aa).

Polar residues predominate over residues 208-229; the sequence is GQQPSQQSTTTKGLPNTVSRNV. The interval 208–242 is disordered; the sequence is GQQPSQQSTTTKGLPNTVSRNVPRTRREGDSSGSV.

It belongs to the TUBGCP family. In terms of assembly, interacts with gamma-tubulin.

It localises to the cytoplasm. The protein resides in the cytoskeleton. The protein localises to the microtubule organizing center. Its subcellular location is the centrosome. In terms of biological role, necessary for the recruitment of gamma-tubulin to the centrosome and for the formation of a functional centrosome. This Xenopus laevis (African clawed frog) protein is Gamma-tubulin complex component 3 homolog (tubgcp3).